The sequence spans 382 residues: F-box/kelch-repeat protein KIB1 (382 aa).

Positions 22 to 69 constitute an F-box domain; sequence SKHSILAVDLVRLILERLSFVDFHRARCVSSIWYIASKTVIGVTNPTT. Kelch repeat units follow at residues 73–117, 159–209, and 259–306; these read ILFP…ASSG, VLWV…FKEN, and IVAK…ITVE.

As to quaternary structure, part of a SCF (SKP1-cullin-F-box) protein ligase complex. Binds directly to several GSK3 family proteins such as SKP1A/ASK1, ASK1/SK11, ASK3/SK12, ASK5/SK13, ASK7/BIN2/SK21, ASK9/SK22 and ASK6/SK23. Interacts with ASK7/BIN2/SK21 in a brassinosteroid (BR)-dependent manner. Expressed in seedlings, leaves, stems, flower buds and flowers.

It localises to the cytoplasm. It is found in the nucleus. Its subcellular location is the nucleolus. Its function is as follows. Component of SCF(ASK-cullin-F-box) E3 ubiquitin ligase complexes, which may mediate the ubiquitination and subsequent proteasomal degradation of target proteins. Required for brassinosteroid (BR) signal transduction. Mediates ASK7/BIN2/SK21 inactivation both by competing with substrate binding (e.g. BZR1) and by promoting its ubiquitination and subsequent proteasomal degradation. This is F-box/kelch-repeat protein KIB1 from Arabidopsis thaliana (Mouse-ear cress).